We begin with the raw amino-acid sequence, 333 residues long: GTPase Obg (333 aa).

Positions 1–158 constitute an Obg domain; the sequence is MFIDSAKIYV…RNIDLELKLL (158 aa). The tract at residues 121-143 is disordered; that stretch reads HGGKGNQHFATPTNRAPRYSEPA. The region spanning 159–323 is the OBG-type G domain; the sequence is ADIGLVGFPN…LKDVLWRIIQ (165 aa). Residues 165–172, 190–194, 212–215, 279–282, and 304–306 each bind GTP; these read GFPNAGKS, FTTLE, DIPG, SKMD, and SSV. Ser-172 and Thr-192 together coordinate Mg(2+).

This sequence belongs to the TRAFAC class OBG-HflX-like GTPase superfamily. OBG GTPase family. As to quaternary structure, monomer. The cofactor is Mg(2+).

It localises to the cytoplasm. An essential GTPase which binds GTP, GDP and possibly (p)ppGpp with moderate affinity, with high nucleotide exchange rates and a fairly low GTP hydrolysis rate. Plays a role in control of the cell cycle, stress response, ribosome biogenesis and in those bacteria that undergo differentiation, in morphogenesis control. This is GTPase Obg from Chloroherpeton thalassium (strain ATCC 35110 / GB-78).